The primary structure comprises 229 residues: Enolase-phosphatase E1 (229 aa).

Belongs to the HAD-like hydrolase superfamily. MasA/MtnC family. In terms of assembly, monomer. It depends on Mg(2+) as a cofactor.

It carries out the reaction 5-methylsulfanyl-2,3-dioxopentyl phosphate + H2O = 1,2-dihydroxy-5-(methylsulfanyl)pent-1-en-3-one + phosphate. The protein operates within amino-acid biosynthesis; L-methionine biosynthesis via salvage pathway; L-methionine from S-methyl-5-thio-alpha-D-ribose 1-phosphate: step 3/6. Its pathway is amino-acid biosynthesis; L-methionine biosynthesis via salvage pathway; L-methionine from S-methyl-5-thio-alpha-D-ribose 1-phosphate: step 4/6. Functionally, bifunctional enzyme that catalyzes the enolization of 2,3-diketo-5-methylthiopentyl-1-phosphate (DK-MTP-1-P) into the intermediate 2-hydroxy-3-keto-5-methylthiopentenyl-1-phosphate (HK-MTPenyl-1-P), which is then dephosphorylated to form the acireductone 1,2-dihydroxy-3-keto-5-methylthiopentene (DHK-MTPene). This Yersinia pestis (strain Pestoides F) protein is Enolase-phosphatase E1.